The sequence spans 171 residues: Shikimate kinase (171 aa).

13–18 (GVGKST) contributes to the ATP binding site. Ser-17 is a binding site for Mg(2+). Residues Asp-35, Arg-59, and Gly-81 each coordinate substrate. Arg-118 lines the ATP pocket. Residue Arg-136 coordinates substrate. Position 153 (Arg-153) interacts with ATP.

It belongs to the shikimate kinase family. As to quaternary structure, monomer. Mg(2+) serves as cofactor.

It is found in the cytoplasm. It catalyses the reaction shikimate + ATP = 3-phosphoshikimate + ADP + H(+). It participates in metabolic intermediate biosynthesis; chorismate biosynthesis; chorismate from D-erythrose 4-phosphate and phosphoenolpyruvate: step 5/7. In terms of biological role, catalyzes the specific phosphorylation of the 3-hydroxyl group of shikimic acid using ATP as a cosubstrate. The protein is Shikimate kinase of Streptomyces avermitilis (strain ATCC 31267 / DSM 46492 / JCM 5070 / NBRC 14893 / NCIMB 12804 / NRRL 8165 / MA-4680).